The primary structure comprises 162 residues: UPF0305 protein MmarC5_0909 (162 aa).

Belongs to the UPF0305 family.

This Methanococcus maripaludis (strain C5 / ATCC BAA-1333) protein is UPF0305 protein MmarC5_0909.